We begin with the raw amino-acid sequence, 210 residues long: UPF0502 protein Sama_1967 (210 aa).

It belongs to the UPF0502 family.

In Shewanella amazonensis (strain ATCC BAA-1098 / SB2B), this protein is UPF0502 protein Sama_1967.